We begin with the raw amino-acid sequence, 333 residues long: Mitochondrial fission regulator 1 (333 aa).

Residue Ser119 is modified to Phosphoserine. The segment covering 286–307 (YRSDSQDEVEKGVPKSESEATS) has biased composition (basic and acidic residues). Positions 286 to 315 (YRSDSQDEVEKGVPKSESEATSERVLFGPH) are disordered.

The protein belongs to the MTFR1 family.

The protein resides in the mitochondrion. Its function is as follows. May play a role in mitochondrial aerobic respiration. May also regulate mitochondrial organization and fission. The polypeptide is Mitochondrial fission regulator 1 (MTFR1) (Pongo abelii (Sumatran orangutan)).